The primary structure comprises 420 residues: Proteasome-activating nucleotidase (420 aa).

The disordered stretch occupies residues 1–25 (MRSHLVKPGSVYDGIEPGELGETTE). The stretch at 22–79 (ETTESVQDRVRQLESRNSFLEEQCSQIESEKRYLENQKIKYEREIRKLQSELDRMKTS) forms a coiled coil. ATP-binding positions include 203 to 208 (GTGKTL) and His-342. A docks into pockets in the proteasome alpha-ring to cause gate opening region spans residues 418–420 (MFV).

The protein belongs to the AAA ATPase family. Homohexamer. The hexameric complex has a two-ring architecture resembling a top hat that caps the 20S proteasome core at one or both ends. Upon ATP-binding, the C-terminus of PAN interacts with the alpha-rings of the proteasome core by binding to the intersubunit pockets.

The protein resides in the cytoplasm. In terms of biological role, ATPase which is responsible for recognizing, binding, unfolding and translocation of substrate proteins into the archaeal 20S proteasome core particle. Is essential for opening the gate of the 20S proteasome via an interaction with its C-terminus, thereby allowing substrate entry and access to the site of proteolysis. Thus, the C-termini of the proteasomal ATPase function like a 'key in a lock' to induce gate opening and therefore regulate proteolysis. Unfolding activity requires energy from ATP hydrolysis, whereas ATP binding alone promotes ATPase-20S proteasome association which triggers gate opening, and supports translocation of unfolded substrates. This Methanosarcina mazei (strain ATCC BAA-159 / DSM 3647 / Goe1 / Go1 / JCM 11833 / OCM 88) (Methanosarcina frisia) protein is Proteasome-activating nucleotidase.